Consider the following 1433-residue polypeptide: DNA-directed RNA polymerase subunit beta' (1433 aa).

Positions 60, 62, 75, and 78 each coordinate Zn(2+). Mg(2+) contacts are provided by Asp-449, Asp-451, and Asp-453. 4 residues coordinate Zn(2+): Cys-777, Cys-851, Cys-858, and Cys-861. 2 stretches are compositionally biased toward acidic residues: residues 1383–1393 and 1411–1433; these read DSEEEEEELSE and EEDEDEDELEEEADDSDDEDDDD. The tract at residues 1383-1433 is disordered; it reads DSEEEEEELSELSEAAPVSTATLSKLVAEEDEDEDELEEEADDSDDEDDDD.

This sequence belongs to the RNA polymerase beta' chain family. The RNAP catalytic core consists of 2 alpha, 1 beta, 1 beta' and 1 omega subunit. When a sigma factor is associated with the core the holoenzyme is formed, which can initiate transcription. The cofactor is Mg(2+). Zn(2+) serves as cofactor.

The enzyme catalyses RNA(n) + a ribonucleoside 5'-triphosphate = RNA(n+1) + diphosphate. DNA-dependent RNA polymerase catalyzes the transcription of DNA into RNA using the four ribonucleoside triphosphates as substrates. The protein is DNA-directed RNA polymerase subunit beta' of Leptospira biflexa serovar Patoc (strain Patoc 1 / Ames).